The primary structure comprises 342 residues: Ribosomal RNA small subunit methyltransferase H (342 aa).

S-adenosyl-L-methionine is bound by residues 62 to 64, Asp-82, Phe-108, Asp-129, and Gln-136; that span reads GGH. Residues 280-319 are disordered; that stretch reads RHSKGQYPEDENLPMPPKRPRYFSKPKRVGPSKAEISHNP. Residues 297–309 show a composition bias toward basic residues; the sequence is KRPRYFSKPKRVG.

Belongs to the methyltransferase superfamily. RsmH family.

The protein localises to the cytoplasm. It catalyses the reaction cytidine(1402) in 16S rRNA + S-adenosyl-L-methionine = N(4)-methylcytidine(1402) in 16S rRNA + S-adenosyl-L-homocysteine + H(+). In terms of biological role, specifically methylates the N4 position of cytidine in position 1402 (C1402) of 16S rRNA. This Psychrobacter cryohalolentis (strain ATCC BAA-1226 / DSM 17306 / VKM B-2378 / K5) protein is Ribosomal RNA small subunit methyltransferase H.